Reading from the N-terminus, the 234-residue chain is UDP-2,3-diacylglucosamine hydrolase (234 aa).

Aspartate 9, histidine 11, aspartate 42, asparagine 80, and histidine 115 together coordinate Mn(2+). 80–81 lines the substrate pocket; sequence NR. Positions 123, 161, 165, 168, and 196 each coordinate substrate. Mn(2+)-binding residues include histidine 196 and histidine 198.

This sequence belongs to the LpxH family. It depends on Mn(2+) as a cofactor.

The protein resides in the cell inner membrane. The enzyme catalyses UDP-2-N,3-O-bis[(3R)-3-hydroxytetradecanoyl]-alpha-D-glucosamine + H2O = 2-N,3-O-bis[(3R)-3-hydroxytetradecanoyl]-alpha-D-glucosaminyl 1-phosphate + UMP + 2 H(+). It functions in the pathway glycolipid biosynthesis; lipid IV(A) biosynthesis; lipid IV(A) from (3R)-3-hydroxytetradecanoyl-[acyl-carrier-protein] and UDP-N-acetyl-alpha-D-glucosamine: step 4/6. Hydrolyzes the pyrophosphate bond of UDP-2,3-diacylglucosamine to yield 2,3-diacylglucosamine 1-phosphate (lipid X) and UMP by catalyzing the attack of water at the alpha-P atom. Involved in the biosynthesis of lipid A, a phosphorylated glycolipid that anchors the lipopolysaccharide to the outer membrane of the cell. The polypeptide is UDP-2,3-diacylglucosamine hydrolase (Histophilus somni (strain 129Pt) (Haemophilus somnus)).